A 111-amino-acid polypeptide reads, in one-letter code: Large ribosomal subunit protein uL22 (111 aa).

The protein belongs to the universal ribosomal protein uL22 family. Part of the 50S ribosomal subunit.

Functionally, this protein binds specifically to 23S rRNA; its binding is stimulated by other ribosomal proteins, e.g. L4, L17, and L20. It is important during the early stages of 50S assembly. It makes multiple contacts with different domains of the 23S rRNA in the assembled 50S subunit and ribosome. The globular domain of the protein is located near the polypeptide exit tunnel on the outside of the subunit, while an extended beta-hairpin is found that lines the wall of the exit tunnel in the center of the 70S ribosome. This is Large ribosomal subunit protein uL22 from Clostridium beijerinckii (strain ATCC 51743 / NCIMB 8052) (Clostridium acetobutylicum).